The sequence spans 422 residues: Terminase, large subunit (422 aa).

Residues 1–198 (MKKVRLSEKF…PANTFVDHST (198 aa)) are ATPase activity. Positions 33–40 (GGRGSAKS) match the Walker A motif motif. The Walker B motif signature appears at 130 to 135 (GMWIEE). Residue Glu-135 is the For ATPase activity of the active site. Residues 232–422 (ALGSGVVPFE…MKKGGVSLWG (191 aa)) form a nuclease activity and binding to the portal protein region. Positions 266, 321, 400, and 403 each coordinate Mn(2+).

Monomer. Interacts with the terminase small subunit; the active complex is probably composed of two decameric ring-shaped terminase small subunit and two monomeric terminase large subunit. Interacts with the portal protein. It depends on Mn(2+) as a cofactor. Mg(2+) is required as a cofactor.

Its function is as follows. The terminase large subunit acts as an ATP driven molecular motor necessary for viral DNA translocation into empty capsids and as an endonuclease that cuts the viral genome to initiate and to end a packaging reaction. The terminase lies at a unique vertex of the procapsid and is composed of two subunits, a small terminase subunit involved in viral DNA recognition (packaging sequence), and a large terminase subunit possessing endonucleolytic and ATPase activities. Both terminase subunits heterooligomerize and are docked on the portal protein to form the packaging machine. The terminase large subunit exhibits endonuclease activity and cleaves the viral genome concatemer once the capsid is full (headful packaging). Once the capsid is packaged with the DNA, the terminase complex is substituted by the adapter (gp15) and the stopper protein (gp16) that form the connector. This chain is Terminase, large subunit (2), found in Bacillus phage SPP1 (Bacteriophage SPP1).